Reading from the N-terminus, the 313-residue chain is 4-hydroxy-3-methylbut-2-enyl diphosphate reductase (313 aa).

Cys12 contributes to the [4Fe-4S] cluster binding site. His41 and His74 together coordinate (2E)-4-hydroxy-3-methylbut-2-enyl diphosphate. 2 residues coordinate dimethylallyl diphosphate: His41 and His74. Isopentenyl diphosphate is bound by residues His41 and His74. Cys96 is a [4Fe-4S] cluster binding site. Position 124 (His124) interacts with (2E)-4-hydroxy-3-methylbut-2-enyl diphosphate. His124 lines the dimethylallyl diphosphate pocket. Position 124 (His124) interacts with isopentenyl diphosphate. Catalysis depends on Glu126, which acts as the Proton donor. A (2E)-4-hydroxy-3-methylbut-2-enyl diphosphate-binding site is contributed by Thr167. A [4Fe-4S] cluster-binding site is contributed by Cys197. Ser225, Ser226, Asn227, and Ser269 together coordinate (2E)-4-hydroxy-3-methylbut-2-enyl diphosphate. Residues Ser225, Ser226, Asn227, and Ser269 each contribute to the dimethylallyl diphosphate site. Positions 225, 226, 227, and 269 each coordinate isopentenyl diphosphate.

It belongs to the IspH family. It depends on [4Fe-4S] cluster as a cofactor.

It catalyses the reaction isopentenyl diphosphate + 2 oxidized [2Fe-2S]-[ferredoxin] + H2O = (2E)-4-hydroxy-3-methylbut-2-enyl diphosphate + 2 reduced [2Fe-2S]-[ferredoxin] + 2 H(+). The catalysed reaction is dimethylallyl diphosphate + 2 oxidized [2Fe-2S]-[ferredoxin] + H2O = (2E)-4-hydroxy-3-methylbut-2-enyl diphosphate + 2 reduced [2Fe-2S]-[ferredoxin] + 2 H(+). The protein operates within isoprenoid biosynthesis; dimethylallyl diphosphate biosynthesis; dimethylallyl diphosphate from (2E)-4-hydroxy-3-methylbutenyl diphosphate: step 1/1. It functions in the pathway isoprenoid biosynthesis; isopentenyl diphosphate biosynthesis via DXP pathway; isopentenyl diphosphate from 1-deoxy-D-xylulose 5-phosphate: step 6/6. In terms of biological role, catalyzes the conversion of 1-hydroxy-2-methyl-2-(E)-butenyl 4-diphosphate (HMBPP) into a mixture of isopentenyl diphosphate (IPP) and dimethylallyl diphosphate (DMAPP). Acts in the terminal step of the DOXP/MEP pathway for isoprenoid precursor biosynthesis. In Baumannia cicadellinicola subsp. Homalodisca coagulata, this protein is 4-hydroxy-3-methylbut-2-enyl diphosphate reductase.